We begin with the raw amino-acid sequence, 321 residues long: Olfactory receptor 5K4 (321 aa).

Residues 1 to 25 (MARENHSLAAEFILIGFTNYPELKT) are Extracellular-facing. N-linked (GlcNAc...) asparagine glycosylation is present at Asn-5. Residues 26–46 (LLFVVFSAIYLVTMVGNLGLV) traverse the membrane as a helical segment. Topologically, residues 47 to 54 (ALIYVERR) are cytoplasmic. A helical transmembrane segment spans residues 55 to 75 (LLTPMYIFLGNLALMDSCCSC). Residues 76-97 (AVTPKMLENFFSEDRIISLYEC) lie on the Extracellular side of the membrane. A disulfide bridge connects residues Cys-97 and Cys-179. The helical transmembrane segment at 98 to 118 (MAQFYFLCLAETTDCFLLATM) threads the bilayer. Over 119 to 139 (AYDRYVAICHPLQYHTMMSKT) the chain is Cytoplasmic. The chain crosses the membrane as a helical span at residues 140–160 (LCIRMTTGAFKAGNLHSMIHV). Over 161-205 (GLLLRLTFCRSNKIHHFFCDILPLYRLSCTDPSINELMIYIFSIP) the chain is Extracellular. Residues 206–226 (IQIFTIATVLISYLCILLTVF) form a helical membrane-spanning segment. Residues 227 to 240 (KMKSKEGRGKAFST) are Cytoplasmic-facing. Residues 241–261 (CASHFLSVSIFYICLLMYIGP) traverse the membrane as a helical segment. Residues 262-268 (SEEGDKD) lie on the Extracellular side of the membrane. Residues 269–289 (TPVAIFYAIVIPLLNPFIYSL) traverse the membrane as a helical segment. The Cytoplasmic portion of the chain corresponds to 290 to 321 (RNKEVINVLKKIMRNYNILKQTCSIANLFLIY).

This sequence belongs to the G-protein coupled receptor 1 family.

It localises to the cell membrane. Functionally, odorant receptor. This chain is Olfactory receptor 5K4 (OR5K4), found in Homo sapiens (Human).